A 390-amino-acid polypeptide reads, in one-letter code: Putative gustatory receptor 36c (390 aa).

At 1–4 (MDLE) the chain is on the cytoplasmic side. Residues 5–25 (SFLLGAVYYYGLFIGLSNFEF) form a helical membrane-spanning segment. Topologically, residues 26 to 36 (DWNTGRVFTKK) are extracellular. The chain crosses the membrane as a helical span at residues 37–57 (WSTLYAIALDSCIFALYIYHW). At 58–75 (TGNTNIVNAIFGRANMLH) the chain is on the cytoplasmic side. A helical transmembrane segment spans residues 76–96 (EYVVAILTGLRIVTGLFTLIL). Over 97 to 132 (RWYQRCKMMDLASKVVRMYVARPQVRRMSRWGILTK) the chain is Extracellular. Residues 133 to 153 (FIFGSITDGLQMAMVLSAMGS) form a helical membrane-spanning segment. The Cytoplasmic portion of the chain corresponds to 154–165 (VDSQFYLGLGLQ). Residues 166-186 (YWMFVILNMAMMQQHMIMLFV) traverse the membrane as a helical segment. Topologically, residues 187–254 (RTQFQLINTE…MEEVFGIQGA (68 aa)) are extracellular. Residues 255–275 (MTYGGYYLSSVGTCYLAYSIL) form a helical membrane-spanning segment. The Cytoplasmic segment spans residues 276–288 (KHGYENLSMTLST). The chain crosses the membrane as a helical span at residues 289–309 (VILAYSWCFFYYLDGMLNLSV). Residues 310-390 (MLHVQDDYWE…FLIQYDIEHF (81 aa)) are Extracellular-facing.

This sequence belongs to the insect chemoreceptor superfamily. Gustatory receptor (GR) family. Gr22e subfamily. Expressed in neurons of the terminal external chemosensory organ of larvae.

The protein localises to the cell membrane. In terms of biological role, probable gustatory receptor which mediates acceptance or avoidance behavior, depending on its substrates. The sequence is that of Putative gustatory receptor 36c (Gr36c) from Drosophila melanogaster (Fruit fly).